The following is a 538-amino-acid chain: [Pyruvate dehydrogenase [acetyl-transferring]]-phosphatase 1, mitochondrial (538 aa).

A mitochondrion-targeting transit peptide spans 1–71; that stretch reads MPAPTQLFFP…WWQYTQGRRY (71 aa). The region spanning 109–525 is the PPM-type phosphatase domain; that stretch reads ILGFDSNQLP…DDITIIVVQF (417 aa). Mn(2+)-binding residues include Asp-144 and Gly-145. N6-acetyllysine is present on Lys-202. Positions 418 and 516 each coordinate Mn(2+).

Belongs to the PP2C family. As to quaternary structure, heterodimer of a catalytic (PDP1) and a regulatory (PDPR) subunit. It depends on Mn(2+) as a cofactor. Mg(2+) serves as cofactor.

The protein localises to the mitochondrion. It carries out the reaction O-phospho-L-seryl-[pyruvate dehydrogenase E1 alpha subunit] + H2O = L-seryl-[pyruvate dehydrogenase E1 alpha subunit] + phosphate. Its activity is regulated as follows. Magnesium-dependent and calcium-stimulated. PDP1 activity strongly depends on its Ca(2+)-dependent binding to the lipoyl domain of E2 subunit of component of the pyruvate dehydrogenase complex. Its function is as follows. Mitochondrial enzyme that catalyzes the dephosphorylation and concomitant reactivation of the alpha subunit of the E1 component of the pyruvate dehydrogenase complex (PDC), thereby stimulating the conversion of pyruvate into acetyl-CoA. The protein is [Pyruvate dehydrogenase [acetyl-transferring]]-phosphatase 1, mitochondrial (Pdp1) of Mus musculus (Mouse).